The following is a 736-amino-acid chain: Orphan sodium- and chloride-dependent neurotransmitter transporter NTT5 (736 aa).

The Cytoplasmic segment spans residues 1-138 (MKTEAQPSTS…FAYLWLNSGG (138 aa)). 3 consecutive transmembrane segments (helical) span residues 139–159 (CSFAAIYIFMLFLVGVPLLFL), 177–197 (IIAPWIGGVGYSSFMVCFILG), and 199–219 (YFNVVNSWIIFYMSQSFQFPV). Over 220-263 (PWEKCPLTMNSSGFDPECERTTPSIYFWYQQALKASDRIEDGGS) the chain is Extracellular. An N-linked (GlcNAc...) asparagine glycan is attached at Asn229. 4 consecutive transmembrane segments (helical) span residues 264–284 (PVYSLVLPFFLCWCLVGAFMI), 290–310 (TGKVIYVLVLLPCFIIVGFFI), 338–358 (VWSLAGGQVLSNTGIGLGSVA), and 383–403 (LTLLVFTSFNFCVLGFWATVI). The Extracellular segment spans residues 404 to 495 (THRCCERNAE…EAMSFLPPSV (92 aa)). 5 helical membrane-spanning segments follow: residues 496-516 (FWSFIFFLMLLAMGLSSAIGI), 534-554 (HTKLLIVGVFLLMFVCGLFFT), 568-588 (YWIVFPIIVVVVFETMAVSWA), 609-629 (IFGWLWPHLCPVVLLIIFVTM), and 659-679 (ALLLMITLFAIVILPIPAYFV). The Cytoplasmic segment spans residues 680–736 (YCRIHRIPFRPKSGDGPMTASTSLPLSHQLTPSKEVQKEEILQVDETKYPSTCNVTS).

It belongs to the sodium:neurotransmitter symporter (SNF) (TC 2.A.22) family. SLC6A16 subfamily. In terms of tissue distribution, highly expressed in peripheral tissues, particularly in testis, pancreas, and prostate.

Its subcellular location is the membrane. The protein is Orphan sodium- and chloride-dependent neurotransmitter transporter NTT5 (SLC6A16) of Homo sapiens (Human).